Reading from the N-terminus, the 446-residue chain is Glycine--tRNA ligase (446 aa).

2 residues coordinate substrate: R100 and E158. Residues 190 to 192 (RNE), 200 to 205 (FRTREF), 275 to 276 (EL), and 319 to 322 (GIER) each bind ATP. Substrate is bound at residue 205–209 (FEQFE). 315 to 319 (EPAVG) lines the substrate pocket.

The protein belongs to the class-II aminoacyl-tRNA synthetase family. In terms of assembly, homodimer.

Its subcellular location is the cytoplasm. The enzyme catalyses tRNA(Gly) + glycine + ATP = glycyl-tRNA(Gly) + AMP + diphosphate. In terms of biological role, catalyzes the attachment of glycine to tRNA(Gly). In Mycoplasma genitalium (strain ATCC 33530 / DSM 19775 / NCTC 10195 / G37) (Mycoplasmoides genitalium), this protein is Glycine--tRNA ligase.